A 232-amino-acid polypeptide reads, in one-letter code: Octanoyltransferase (232 aa).

One can recognise a BPL/LPL catalytic domain in the interval 43–231; it reads LPTSNYLLFV…HLTHLFEAEI (189 aa). Residues 88–95, 160–162, and 173–175 each bind substrate; these read RGGDITYH, AMG, and GFA. Residue C191 is the Acyl-thioester intermediate of the active site.

It belongs to the LipB family.

The protein localises to the cytoplasm. It carries out the reaction octanoyl-[ACP] + L-lysyl-[protein] = N(6)-octanoyl-L-lysyl-[protein] + holo-[ACP] + H(+). Its pathway is protein modification; protein lipoylation via endogenous pathway; protein N(6)-(lipoyl)lysine from octanoyl-[acyl-carrier-protein]: step 1/2. Functionally, catalyzes the transfer of endogenously produced octanoic acid from octanoyl-acyl-carrier-protein onto the lipoyl domains of lipoate-dependent enzymes. Lipoyl-ACP can also act as a substrate although octanoyl-ACP is likely to be the physiological substrate. The sequence is that of Octanoyltransferase from Flavobacterium johnsoniae (strain ATCC 17061 / DSM 2064 / JCM 8514 / BCRC 14874 / CCUG 350202 / NBRC 14942 / NCIMB 11054 / UW101) (Cytophaga johnsonae).